The primary structure comprises 335 residues: Dihydroorotate dehydrogenase (quinone) (335 aa).

Residues 59-63 (AGLDK) and Thr-83 each bind FMN. Substrate is bound at residue Lys-63. 108–112 (NRMGF) contacts substrate. FMN contacts are provided by Asn-136 and Asn-169. Asn-169 provides a ligand contact to substrate. Ser-172 (nucleophile) is an active-site residue. Residue Asn-174 participates in substrate binding. Positions 214 and 242 each coordinate FMN. 243 to 244 (NT) is a binding site for substrate. Residues Gly-265, Gly-294, and 315 to 316 (YS) each bind FMN.

This sequence belongs to the dihydroorotate dehydrogenase family. Type 2 subfamily. In terms of assembly, monomer. FMN serves as cofactor.

Its subcellular location is the cell membrane. The catalysed reaction is (S)-dihydroorotate + a quinone = orotate + a quinol. It participates in pyrimidine metabolism; UMP biosynthesis via de novo pathway; orotate from (S)-dihydroorotate (quinone route): step 1/1. Functionally, catalyzes the conversion of dihydroorotate to orotate with quinone as electron acceptor. This chain is Dihydroorotate dehydrogenase (quinone), found in Neisseria meningitidis serogroup C / serotype 2a (strain ATCC 700532 / DSM 15464 / FAM18).